A 253-amino-acid chain; its full sequence is MTTIDLNCDLGESFGAYKMGNDDEILPFVSSINVACGFHAGDPSVMRQTVEKAMQHNVAIGAHPGFPDLIGFGRRNMNVSANEVYDYVLYQIGALDAFVKAAGGKMQHVKPHGALYNMAATNPEIADAIAKAIHHMNPSLLLYGLANSEAFIQAAEKYNITLVQEAFADRTYKQDGTLTSRTEENALIKNEDEAIKQVLQMVKEGYVNTVNGKKVAVHAQTICLHGDGEKAVQFAEKIYRTFKLNNISICAPK.

It belongs to the LamB/PxpA family. In terms of assembly, forms a complex composed of PxpA, PxpB and PxpC.

The catalysed reaction is 5-oxo-L-proline + ATP + 2 H2O = L-glutamate + ADP + phosphate + H(+). Catalyzes the cleavage of 5-oxoproline to form L-glutamate coupled to the hydrolysis of ATP to ADP and inorganic phosphate. The sequence is that of 5-oxoprolinase subunit A from Bacillus cereus (strain 03BB102).